The sequence spans 337 residues: Anthranilate phosphoribosyltransferase (337 aa).

5-phospho-alpha-D-ribose 1-diphosphate-binding positions include glycine 78, 81-82, threonine 86, 88-91, 106-114, and serine 118; these read GD, NIST, and KHGNRSVSS. Glycine 78 contacts anthranilate. Serine 90 contacts Mg(2+). Asparagine 109 serves as a coordination point for anthranilate. Arginine 164 is a binding site for anthranilate. Mg(2+)-binding residues include aspartate 222 and glutamate 223.

It belongs to the anthranilate phosphoribosyltransferase family. Homodimer. Mg(2+) is required as a cofactor.

The catalysed reaction is N-(5-phospho-beta-D-ribosyl)anthranilate + diphosphate = 5-phospho-alpha-D-ribose 1-diphosphate + anthranilate. It participates in amino-acid biosynthesis; L-tryptophan biosynthesis; L-tryptophan from chorismate: step 2/5. Functionally, catalyzes the transfer of the phosphoribosyl group of 5-phosphorylribose-1-pyrophosphate (PRPP) to anthranilate to yield N-(5'-phosphoribosyl)-anthranilate (PRA). The polypeptide is Anthranilate phosphoribosyltransferase (Idiomarina loihiensis (strain ATCC BAA-735 / DSM 15497 / L2-TR)).